Reading from the N-terminus, the 142-residue chain is Transcriptional regulator MraZ (142 aa).

SpoVT-AbrB domains are found at residues 5–51 (ASAL…PRPE) and 77–120 (AMDV…DAQT).

This sequence belongs to the MraZ family. As to quaternary structure, forms oligomers.

Its subcellular location is the cytoplasm. It localises to the nucleoid. The protein is Transcriptional regulator MraZ of Burkholderia mallei (strain NCTC 10247).